A 215-amino-acid chain; its full sequence is MSNNYPHPLLAREGWPFIAIALAVALVINGAAGFGWALPFWLLFIFVVQFFRDPPRPIPQGAKDVLSPADGRIVAIEPVRDPYLDRDSVKISVFMNVFNVHSNRSPVDGEVVARWYNAGRFVNAALDKASVENERNALHLRTRDGHDVTCVQVAGLIARRILCYVEAGASLARGQRYGFIRFGSRVDVYLPAGSRARVTIGDKVSASSTILAELP.

S184 acts as the Schiff-base intermediate with substrate; via pyruvic acid in catalysis. A Pyruvic acid (Ser); by autocatalysis modification is found at S184.

It belongs to the phosphatidylserine decarboxylase family. PSD-A subfamily. Heterodimer of a large membrane-associated beta subunit and a small pyruvoyl-containing alpha subunit. Pyruvate serves as cofactor. Is synthesized initially as an inactive proenzyme. Formation of the active enzyme involves a self-maturation process in which the active site pyruvoyl group is generated from an internal serine residue via an autocatalytic post-translational modification. Two non-identical subunits are generated from the proenzyme in this reaction, and the pyruvate is formed at the N-terminus of the alpha chain, which is derived from the carboxyl end of the proenzyme. The post-translation cleavage follows an unusual pathway, termed non-hydrolytic serinolysis, in which the side chain hydroxyl group of the serine supplies its oxygen atom to form the C-terminus of the beta chain, while the remainder of the serine residue undergoes an oxidative deamination to produce ammonia and the pyruvoyl prosthetic group on the alpha chain.

It localises to the cell membrane. The catalysed reaction is a 1,2-diacyl-sn-glycero-3-phospho-L-serine + H(+) = a 1,2-diacyl-sn-glycero-3-phosphoethanolamine + CO2. It functions in the pathway phospholipid metabolism; phosphatidylethanolamine biosynthesis; phosphatidylethanolamine from CDP-diacylglycerol: step 2/2. Catalyzes the formation of phosphatidylethanolamine (PtdEtn) from phosphatidylserine (PtdSer). In Aromatoleum aromaticum (strain DSM 19018 / LMG 30748 / EbN1) (Azoarcus sp. (strain EbN1)), this protein is Phosphatidylserine decarboxylase proenzyme.